The following is a 133-amino-acid chain: Salivary cystatin-L2 (133 aa).

An N-terminal signal peptide occupies residues 1–18 (MTSSLALVLLLGGAAVCA). One can recognise a Cystatin domain in the interval 34–118 (DDPKYLELAH…RTCTAVIYEN (85 aa)).

The protein belongs to the cystatin family. As to expression, salivary gland, midgut and other tissues.

Its subcellular location is the secreted. Its function is as follows. Inhibitor of cysteine proteinases. Inhibits host cathepsin L (CTSL) and S (CTSS). Modulates production of various cytokines and chemokines in lipopolysaccharide (LPS)-stimulated mouse dendritic cell. Suppresses maturation of mouse bone-marrow-derived dendritic cells (BMDCs). (Microbial infection) Modulates Borrelia miyamotoi-stimulated immune responses in mice by suppressing activities of host dendritic and T-cells. This chain is Salivary cystatin-L2, found in Ixodes persulcatus (Taiga tick).